Here is a 251-residue protein sequence, read N- to C-terminus: Ubiquinone biosynthesis O-methyltransferase (251 aa).

S-adenosyl-L-methionine-binding residues include Arg36, Gly61, Asp82, and Ile124.

Belongs to the methyltransferase superfamily. UbiG/COQ3 family.

The enzyme catalyses a 3-demethylubiquinol + S-adenosyl-L-methionine = a ubiquinol + S-adenosyl-L-homocysteine + H(+). It carries out the reaction a 3-(all-trans-polyprenyl)benzene-1,2-diol + S-adenosyl-L-methionine = a 2-methoxy-6-(all-trans-polyprenyl)phenol + S-adenosyl-L-homocysteine + H(+). The protein operates within cofactor biosynthesis; ubiquinone biosynthesis. Functionally, O-methyltransferase that catalyzes the 2 O-methylation steps in the ubiquinone biosynthetic pathway. In Rickettsia akari (strain Hartford), this protein is Ubiquinone biosynthesis O-methyltransferase.